Here is a 253-residue protein sequence, read N- to C-terminus: 5-oxoprolinase subunit A (253 aa).

This sequence belongs to the LamB/PxpA family. In terms of assembly, forms a complex composed of PxpA, PxpB and PxpC.

The catalysed reaction is 5-oxo-L-proline + ATP + 2 H2O = L-glutamate + ADP + phosphate + H(+). Functionally, catalyzes the cleavage of 5-oxoproline to form L-glutamate coupled to the hydrolysis of ATP to ADP and inorganic phosphate. This chain is 5-oxoprolinase subunit A, found in Bacillus cereus (strain AH187).